Reading from the N-terminus, the 238-residue chain is MTPVENVDLSEVKKFEDLAHRWWDAESEFKPLHEINPLRLDFIDERAALPGKRVLDVGCGGGILSESMARRGAHVVGIDMGEAPLSVARLHGLESGVSVDYRRTTIEELAEAEAESFDVVTCMEMLEHVPDPASVIAACARVAKPGADLFFSTINRNPKSFLFAIVGAEYVLKMLPRGTHEWKKFIKPSELAAWLRSADLDLCEMRGMTYNPLLKEYKLGDDVDVNYLMHAVKPLKDA.

R39, G58, D79, and M123 together coordinate S-adenosyl-L-methionine.

The protein belongs to the methyltransferase superfamily. UbiG/COQ3 family.

The enzyme catalyses a 3-demethylubiquinol + S-adenosyl-L-methionine = a ubiquinol + S-adenosyl-L-homocysteine + H(+). It carries out the reaction a 3-(all-trans-polyprenyl)benzene-1,2-diol + S-adenosyl-L-methionine = a 2-methoxy-6-(all-trans-polyprenyl)phenol + S-adenosyl-L-homocysteine + H(+). It participates in cofactor biosynthesis; ubiquinone biosynthesis. Functionally, O-methyltransferase that catalyzes the 2 O-methylation steps in the ubiquinone biosynthetic pathway. The protein is Ubiquinone biosynthesis O-methyltransferase of Hahella chejuensis (strain KCTC 2396).